The sequence spans 331 residues: Carbonic anhydrase-related protein 11 (331 aa).

The N-terminal stretch at 1 to 23 (MGGAARLSAPRALVLWAVLGAAA) is a signal peptide. The 274-residue stretch at 33–306 (DWWSYKDNLQ…LAHRALRGNR (274 aa)) folds into the Alpha-carbonic anhydrase domain. 4 N-linked (GlcNAc...) asparagine glycosylation sites follow: asparagine 118, asparagine 170, asparagine 189, and asparagine 263. Residues 303–331 (RGNRDPRHPERRCRGPNYRLHVDGAPHGR) form a disordered region. The span at 322-331 (LHVDGAPHGR) shows a compositional bias: basic and acidic residues.

The protein belongs to the alpha-carbonic anhydrase family.

It localises to the secreted. Functionally, does not have a catalytic activity. The polypeptide is Carbonic anhydrase-related protein 11 (CA11) (Sus scrofa (Pig)).